A 403-amino-acid chain; its full sequence is MRLSRLLIGASLGVALSSTVFTAALADVKFGSLYPISGSLALLGEESARGLELAVDEVNAAGGIKGEKVVLERGDAVDNNQATGEARRLISLVGVKAIFGTYSSARVIAASQVSELAGIPYFEMGAVADEVTGRGLQYLFRTNPTAENMAKDSVDMLIKGIAPGLGKDPKDMKIGIIYEDSSYGTSVAGHQEDNAKAAGLTVVLKSGYPSNTVDMSSLVLELREKGADVVMQTSYQNDSVLFLQQANEAGYKPLAIIGGGGGYSMQPTADAVGHDLIDGVFDADYTQYAVNTSATPGLTEFVEAYKAKYGSQPRSGHSLTNYVGAKAIFQALNAGEGFEPDQIVSAVKALDIPDGQAAAGYGVKFGKNNQNERATMMGMQWQDGKLVTVYPENAAIAKMRFKK.

Positions 1–26 (MRLSRLLIGASLGVALSSTVFTAALA) are cleaved as a signal peptide.

It belongs to the leucine-binding protein family.

In terms of biological role, component of an amino-acid transport system. The polypeptide is Leu/Ile/Val-binding protein homolog 8 (Brucella melitensis biotype 1 (strain ATCC 23456 / CCUG 17765 / NCTC 10094 / 16M)).